The primary structure comprises 101 residues: uncharacterized protein (101 aa).

Residues 76-101 are disordered; that stretch reads KGNVTRRRKKTHLGNDDGKKEAQEKM. The segment covering 88 to 101 has biased composition (basic and acidic residues); that stretch reads LGNDDGKKEAQEKM.

This is an uncharacterized protein from Homo sapiens (Human).